Here is a 186-residue protein sequence, read N- to C-terminus: Elongation factor P (186 aa).

The protein belongs to the elongation factor P family.

Its subcellular location is the cytoplasm. Its pathway is protein biosynthesis; polypeptide chain elongation. In terms of biological role, involved in peptide bond synthesis. Stimulates efficient translation and peptide-bond synthesis on native or reconstituted 70S ribosomes in vitro. Probably functions indirectly by altering the affinity of the ribosome for aminoacyl-tRNA, thus increasing their reactivity as acceptors for peptidyl transferase. The polypeptide is Elongation factor P (Synechococcus sp. (strain CC9902)).